The sequence spans 70 residues: Large ribosomal subunit protein eL38 (70 aa).

The protein belongs to the eukaryotic ribosomal protein eL38 family.

The protein is Large ribosomal subunit protein eL38 (RpL38) of Bombyx mori (Silk moth).